The sequence spans 317 residues: Large ribosomal subunit protein uL10z (317 aa).

It belongs to the universal ribosomal protein uL10 family. P0 forms a pentameric complex by interaction with dimers of P1 and P2. In terms of processing, phosphorylated.

Its function is as follows. Ribosomal protein P0 is the functional equivalent of E.coli protein L10. The sequence is that of Large ribosomal subunit protein uL10z (RPP0A) from Arabidopsis thaliana (Mouse-ear cress).